Reading from the N-terminus, the 397-residue chain is MLNSLDLEGRPEDTRVVVAMSGGVDSSVTAALLKSEGYDVVGITLQLYDHGAATHRKGACCAGQDIHDARNVAERLGIPHYVLDYEDRFRESVIDNFAASYASGETPVPCIECNRAIKFGDLLKTARELGASVLATGHYVASRRLADGSRALVCAADADRDQSYFLFATTREQLDYLRFPLGDMTKPEVRELARRFGLEVADKHDSQDICFVPTGRYTDIIGKLRPNAMEPGEIVDLNGRVLGAHQGIANYTIGQRKGLGIAAGAPLYVVKLDVATRRVVVGPREALRTHRITLREVNWIGDGVLDAAVRDGLELFVRVRSTRPPQPAWLRGADGQYEVELVAGEEGVSPGQACVFYDAASGRARVLGGGFIQSAVAESRTTAGLVRPQRVAEPVRG.

ATP is bound by residues 19–26 (AMSGGVDS) and leucine 45. The active-site Nucleophile is cysteine 113. Cysteine 113 and cysteine 210 are joined by a disulfide. Position 137 (glycine 137) interacts with ATP. Residues 160–162 (RDQ) form an interaction with tRNA region. Cysteine 210 (cysteine persulfide intermediate) is an active-site residue.

Belongs to the MnmA/TRMU family.

The protein localises to the cytoplasm. The enzyme catalyses S-sulfanyl-L-cysteinyl-[protein] + uridine(34) in tRNA + AH2 + ATP = 2-thiouridine(34) in tRNA + L-cysteinyl-[protein] + A + AMP + diphosphate + H(+). Catalyzes the 2-thiolation of uridine at the wobble position (U34) of tRNA, leading to the formation of s(2)U34. This is tRNA-specific 2-thiouridylase MnmA from Bradyrhizobium sp. (strain BTAi1 / ATCC BAA-1182).